The primary structure comprises 349 residues: Fe(3+) ions import ATP-binding protein FbpC (349 aa).

An ABC transporter domain is found at 7–237; the sequence is LVLKNVTKAF…PNSLFLANFM (231 aa). 39–46 serves as a coordination point for ATP; that stretch reads GPSGCGKT.

This sequence belongs to the ABC transporter superfamily. Fe(3+) ion importer (TC 3.A.1.10) family. In terms of assembly, the complex is composed of two ATP-binding proteins (FbpC), two transmembrane proteins (FbpB) and a solute-binding protein (FbpA).

It localises to the cell inner membrane. The enzyme catalyses Fe(3+)(out) + ATP + H2O = Fe(3+)(in) + ADP + phosphate + H(+). Its function is as follows. Part of the ABC transporter complex FbpABC involved in Fe(3+) ions import. Responsible for energy coupling to the transport system. In Pasteurella multocida (strain Pm70), this protein is Fe(3+) ions import ATP-binding protein FbpC.